Reading from the N-terminus, the 153-residue chain is Ribosome maturation factor RimP (153 aa).

It belongs to the RimP family.

It localises to the cytoplasm. Functionally, required for maturation of 30S ribosomal subunits. In Pelotomaculum thermopropionicum (strain DSM 13744 / JCM 10971 / SI), this protein is Ribosome maturation factor RimP.